A 498-amino-acid chain; its full sequence is MLSSSALYAAIDLGSNSFHMLVVREVAGSIQTLARIKRKVRLAAGLDQNNLLSHEAMQRGWQCLKLFSERLQDIPRAQIRVVATATLRLASNADEFLQTAEQILGCPIQVISGEEEARLIYHGVAHTTGGPDQRLVVDIGGGSTELVTGTGAQAAQLYSLSMGCVTWLERFFSDRNLGQENFERAEQAAREMVRPIAPQLRQHGWQVCVGASGTVQALQEIMVAQGMDERITLSKLRQLKQRAIQCGKLEELEIEGLTLERALVFPSGLSILLAIFQELGIESMMLAGGALREGLVYGMLHLPVEQDIRSRTIRNLQRRYLLDTEQAERVSQLAANFSQQVSNEWQLDARCRELLHSACLIHEIGLSVDFKQAPQHAAYLIRHLDLPGFTPAQKKLLATLLQNQSNTIDLPLLSQQNALPPRTAQRLCRILRLAIIFASRRRDDTLPAVRLRANNDDELTVILPPGWLEQHPLRAEALDQESHWQSYVHWPLILEEQR.

This sequence belongs to the GppA/Ppx family. GppA subfamily.

It carries out the reaction guanosine 3'-diphosphate 5'-triphosphate + H2O = guanosine 3',5'-bis(diphosphate) + phosphate + H(+). The protein operates within purine metabolism; ppGpp biosynthesis; ppGpp from GTP: step 2/2. Its function is as follows. Catalyzes the conversion of pppGpp to ppGpp. Guanosine pentaphosphate (pppGpp) is a cytoplasmic signaling molecule which together with ppGpp controls the 'stringent response', an adaptive process that allows bacteria to respond to amino acid starvation, resulting in the coordinated regulation of numerous cellular activities. The chain is Guanosine-5'-triphosphate,3'-diphosphate pyrophosphatase from Serratia proteamaculans (strain 568).